The primary structure comprises 267 residues: Tetrahydromethanopterin S-methyltransferase subunit C (267 aa).

A run of 8 helical transmembrane segments spans residues 18-38 (LMAL…VNPV), 39-59 (IGPV…ADAI), 76-96 (YMSV…VFVV), 99-119 (IAVP…VAVL), 138-158 (ISGA…GSYT), 163-183 (LTSV…TMAI), 209-229 (FISM…WWLV), and 230-250 (SLIG…ASFE).

The protein belongs to the MtrC family. The complex is composed of 8 subunits; MtrA, MtrB, MtrC, MtrD, MtrE, MtrF, MtrG and MtrH.

The protein resides in the cell membrane. The enzyme catalyses 5-methyl-5,6,7,8-tetrahydromethanopterin + coenzyme M + 2 Na(+)(in) = 5,6,7,8-tetrahydromethanopterin + methyl-coenzyme M + 2 Na(+)(out). Its pathway is one-carbon metabolism; methanogenesis from CO(2); methyl-coenzyme M from 5,10-methylene-5,6,7,8-tetrahydromethanopterin: step 2/2. In terms of biological role, part of a complex that catalyzes the formation of methyl-coenzyme M and tetrahydromethanopterin from coenzyme M and methyl-tetrahydromethanopterin. This is an energy-conserving, sodium-ion translocating step. In Methanothermobacter marburgensis (strain ATCC BAA-927 / DSM 2133 / JCM 14651 / NBRC 100331 / OCM 82 / Marburg) (Methanobacterium thermoautotrophicum), this protein is Tetrahydromethanopterin S-methyltransferase subunit C.